Here is a 615-residue protein sequence, read N- to C-terminus: TORTIFOLIA1-like protein 3 (615 aa).

HEAT repeat units lie at residues 44-81 (GNLQ…SLPL), 86-123 (PFLS…RTTK), 125-163 (PFYS…SASD), 168-205 (RLGQ…AGGL), and 213-250 (GGLK…MERN). The interval 288 to 446 (VPDLSEEVSP…HHVLSENPNS (159 aa)) is disordered. Residues 318–347 (RVGSTPAKSRTHLVNRSTPPGSSLATTARK) are compositionally biased toward polar residues. Positions 391 to 406 (DEQHCDHDENAKETSH) are enriched in basic and acidic residues. The segment covering 407–426 (SSHNTVQKLGGVSSSLNGNI) has biased composition (polar residues). Ser-456 is modified (phosphoserine).

The sequence is that of TORTIFOLIA1-like protein 3 from Arabidopsis thaliana (Mouse-ear cress).